We begin with the raw amino-acid sequence, 322 residues long: Reticulocalbin-1 (322 aa).

The signal sequence occupies residues 1–19 (MDVLGFICAVFLGTVVLHA). Asn44 carries an N-linked (GlcNAc...) asparagine glycan. EF-hand domains lie at 70–105 (ESKD…VQKR), 106–141 (YVYE…YYLS), 157–192 (KMLP…EEFE), 194–229 (MKDI…HEDR), 235–270 (WVKT…QDYD), and 271–306 (HAQA…FVGS). Ca(2+) contacts are provided by Asp83, Asp85, Asn87, Tyr89, Glu94, Asp119, Asn121, Asp123, Lys125, Glu130, Asp170, Asp172, Asp174, Glu181, Asp207, Asn209, Asp211, His213, Glu218, Asp248, Asn250, Asp252, Lys254, Glu259, Asp284, Asp286, Asp288, Met290, and Glu295. The Prevents secretion from ER signature appears at 319–322 (HDEL).

Belongs to the CREC family.

It localises to the endoplasmic reticulum lumen. In terms of biological role, may regulate calcium-dependent activities in the endoplasmic reticulum lumen or post-ER compartment. In Takifugu rubripes (Japanese pufferfish), this protein is Reticulocalbin-1 (rcn1).